Consider the following 676-residue polypeptide: ATP-dependent zinc metalloprotease FTSH 2, chloroplastic (676 aa).

The transit peptide at M1 to T32 directs the protein to the chloroplast. The chain crosses the membrane as a helical span at residues L155–L175. G254–T261 is a binding site for ATP. H475 provides a ligand contact to Zn(2+). E476 is an active-site residue. Residues H479 and D553 each contribute to the Zn(2+) site.

This sequence in the N-terminal section; belongs to the AAA ATPase family. The protein in the C-terminal section; belongs to the peptidase M41 family. Zn(2+) is required as a cofactor.

It localises to the plastid. Its subcellular location is the chloroplast thylakoid membrane. In terms of biological role, probable ATP-dependent zinc metallopeptidase. The chain is ATP-dependent zinc metalloprotease FTSH 2, chloroplastic (FTSH2) from Oryza sativa subsp. japonica (Rice).